A 251-amino-acid polypeptide reads, in one-letter code: GTP cyclohydrolase 1 type 2 homolog (251 aa).

H62, H63, D103, H215, and E219 together coordinate a divalent metal cation.

It belongs to the GTP cyclohydrolase I type 2/NIF3 family. As to quaternary structure, homohexamer.

The chain is GTP cyclohydrolase 1 type 2 homolog from Mycoplasmopsis pulmonis (strain UAB CTIP) (Mycoplasma pulmonis).